We begin with the raw amino-acid sequence, 389 residues long: Pregnancy-associated glycoprotein 1 (389 aa).

Positions 1-15 (MKWLVILGLVALSEC) are cleaved as a signal peptide. Residues 76-386 (YVGNITIGTP…DRGQNRIGLR (311 aa)) form the Peptidase A1 domain. Residue N79 is glycosylated (N-linked (GlcNAc...) asparagine). Residue D94 is part of the active site. The cysteines at positions 107 and 112 are disulfide-linked. N-linked (GlcNAc...) asparagine glycosylation occurs at N130. An intrachain disulfide couples C268 to C272. Residue D277 is part of the active site. Residues C311 and C345 are joined by a disulfide bond. N348 carries N-linked (GlcNAc...) asparagine glycosylation.

This sequence belongs to the peptidase A1 family. As to expression, expressed throughout the chorion, with the signal localized exclusively over the trophectoderm.

The protein resides in the secreted. It localises to the extracellular space. Appears to be proteolytically inactive. This chain is Pregnancy-associated glycoprotein 1, found in Sus scrofa (Pig).